The chain runs to 290 residues: MFTKSVFIALVAGVLGVTAAYDPAHMPAKTDAKGGQTGYNDCQQRYGATNPKAKCQNIFINSVKDFCLWGPPKTNGADTVGDLEAVMVSYCMKSGYGTRLIPDGTIHGAHFLKTPSFVQITGTGDFTKIHIQAGDEGGELDPHGATGSGNPVGGQVFTRAYTGNWEQLPEWQNFMSATEYCFRACRSGPWDRQWCPHIYDVMGCLWNEPANYDRGVFEQCDGTEGEWPGVYSGSTWYQGVKPTPAAQPAGKSSNCRYYPSISNGPAIKTPSKRSVMATHVKRSPEWEEEP.

The first 19 residues, 1-19 (MFTKSVFIALVAGVLGVTA), serve as a signal peptide directing secretion. Positions 266 to 290 (AIKTPSKRSVMATHVKRSPEWEEEP) are disordered.

Its subcellular location is the secreted. It is found in the nucleus. In terms of biological role, plays a role in the formation of the appressorium, a specialized infection structure with the purpose of penetrating the host surface, and is required for proper remodeling of the appressorium wall and vesicle secretion. This chain is Appressorium protein ROW2, found in Mycosarcoma maydis (Corn smut fungus).